We begin with the raw amino-acid sequence, 200 residues long: Molybdenum cofactor guanylyltransferase (200 aa).

GTP is bound by residues Leu10 to Gly12, Lys23, Asn51, Asp69, and Asp99. Asp99 is a Mg(2+) binding site.

The protein belongs to the MobA family. Monomer. The cofactor is Mg(2+).

The protein localises to the cytoplasm. The enzyme catalyses Mo-molybdopterin + GTP + H(+) = Mo-molybdopterin guanine dinucleotide + diphosphate. Functionally, transfers a GMP moiety from GTP to Mo-molybdopterin (Mo-MPT) cofactor (Moco or molybdenum cofactor) to form Mo-molybdopterin guanine dinucleotide (Mo-MGD) cofactor. The protein is Molybdenum cofactor guanylyltransferase of Shewanella halifaxensis (strain HAW-EB4).